A 717-amino-acid polypeptide reads, in one-letter code: MAAYTQFGYGGFPSASQLLPPSVQTTEDASANVNVNVNEALVMTNAPAMSPTGGQDCQGSQPSGGAGGDASSGALSPNALSQNSNAATVVGAGGGSSAGGGGPADLATGGSLDGNGVGTTPTAGGAGGGGSCCENGRPIMTDPVSGQTVCSCQYDSARLALSSYSRLPAASVGVYGTPYPSTDQNPYQSIGVDSSAFYSPLSNPYGLKDTGAGPEMGAWTSAGLQPTTGYYSYDPMSAYGGLLVSNSSYGASYDLAARRKNATRESTATLKAWLNEHKKNPYPTKGEKIMLAIITKMTLTQVSTWFANARRRLKKENKMTWEPKNRTDDDDDALVSDDEKDKEDLEPSKGSQGSVSLAKDETKEEEDAIDEDQKCLGQANILRAGFGYPSAGSGSGGYPGGGGSSSGHPGGYHPYHHQHPAYYQAGQQGGMLPFHGENSKLQTDLGDPKNQLGRDCGVPIPATKPKIWSLADTVGCKTPPPAYMGHQSMPLQQQQQQQQQQQQAQHQYPPSEAGRDQQLFNGAAAPYLRPHTTAYGGFLGATTQQLHTTNNSIPYSNMPPQQQQPQQQQQQLQQGGTIHTTGSSSGPIIPLQFHNRHPQQQQQLQQQSQSTASQRAMGFLEAQPDTPPQTPPNMKVLSGALSLLPTATQVPMTATCRSSNAFGFPASGYPMNFSARLGEYSPRDDYSSGNSSSSSSSSPQLQRNEAMFKPLFKKFTN.

Disordered stretches follow at residues 46-80 (APAMSPTGGQDCQGSQPSGGAGGDASSGALSPNAL), 94-130 (GGSSAGGGGPADLATGGSLDGNGVGTTPTAGGAGGGG), 317-371 (NKMT…AIDE), 395-418 (SGGYPGGGGSSSGHPGGYHPYHHQ), 478-516 (TPPPAYMGHQSMPLQQQQQQQQQQQQAQHQYPPSEAGRD), 549-615 (TNNS…ASQR), and 675-717 (ARLG…KFTN). A compositionally biased stretch (gly residues) spans 94 to 103 (GGSSAGGGGP). The homeobox; TALE-type DNA-binding region spans 255 to 317 (LAARRKNATR…NARRRLKKEN (63 aa)). Residues 317-327 (NKMTWEPKNRT) are compositionally biased toward basic and acidic residues. Phosphoserine is present on serine 336. Positions 337 to 347 (DDEKDKEDLEP) are enriched in basic and acidic residues. A compositionally biased stretch (gly residues) spans 395–410 (SGGYPGGGGSSSGHPG). 4 stretches are compositionally biased toward low complexity: residues 492–507 (QQQQQQQQQQQQAQHQ), 559–589 (PPQQQQPQQQQQQLQQGGTIHTTGSSSGPII), 599–614 (QQQQQLQQQSQSTASQ), and 687–698 (SSGNSSSSSSSS).

This sequence belongs to the TALE/IRO homeobox family.

The protein resides in the nucleus. Controls proneural and vein forming genes. Positive transcriptional controller of AC-SC (achaete-scute). May act as an activator that interacts with the transcriptional complex assembled on the AC and SC promoters and participates in transcription initiation. The polypeptide is Homeobox protein araucan (ara) (Drosophila melanogaster (Fruit fly)).